A 449-amino-acid polypeptide reads, in one-letter code: Trigger factor (449 aa).

Positions 160–231 constitute a PPIase FKBP-type domain; the sequence is TDQVTIEELG…VQSVQTKQLQ (72 aa). The tract at residues 411–449 is disordered; that stretch reads GQQVAGRQEAGAEQTAQAAEQESGQPQAEGEQAAEQRGE. Positions 415–443 are enriched in low complexity; the sequence is AGRQEAGAEQTAQAAEQESGQPQAEGEQA.

This sequence belongs to the FKBP-type PPIase family. Tig subfamily.

It localises to the cytoplasm. It catalyses the reaction [protein]-peptidylproline (omega=180) = [protein]-peptidylproline (omega=0). In terms of biological role, involved in protein export. Acts as a chaperone by maintaining the newly synthesized protein in an open conformation. Functions as a peptidyl-prolyl cis-trans isomerase. The polypeptide is Trigger factor (Deinococcus geothermalis (strain DSM 11300 / CIP 105573 / AG-3a)).